Reading from the N-terminus, the 346-residue chain is MSEPARLISPEKRGEDLDITLRPQSLDEFTGQAEARANLKVFIEAAKNRGEALDHVLFVGPPGLGKTTLAQIMAKELGVNFRSTSGPVIAKAGDLAALLTNLEERDVLFIDEIHRLNPAVEEILYPAMEDFQLDLIIGEGPAARSVKIDLSKFTLVAATTRLGLLTTPLRDRFGIPVRLSFYTVEELELIVRRGARLMNLPITEEGAREIARRARGTPRIAGRLLRRVRDFAEVARAEAVTREIADEALTRLLVDNVGFDQLDKRYLNMIAVNFGGGPVGIETIAAGLSEPRDAIEDIIEPYMIQQGFIQRTPRGRVLTAIAWKHLGMQPPKDMEAAQFRLFQEDN.

Residues 1-182 form a large ATPase domain (RuvB-L) region; the sequence is MSEPARLISP…FGIPVRLSFY (182 aa). Residues Leu21, Arg22, Gly63, Lys66, Thr67, Thr68, 129-131, Arg172, Tyr182, and Arg219 contribute to the ATP site; that span reads EDF. Thr67 serves as a coordination point for Mg(2+). Positions 183–253 are small ATPAse domain (RuvB-S); that stretch reads TVEELELIVR…IADEALTRLL (71 aa). Residues 256-346 are head domain (RuvB-H); that stretch reads NVGFDQLDKR…AQFRLFQEDN (91 aa). Residues Arg292, Arg311, and Arg316 each contribute to the DNA site.

Belongs to the RuvB family. As to quaternary structure, homohexamer. Forms an RuvA(8)-RuvB(12)-Holliday junction (HJ) complex. HJ DNA is sandwiched between 2 RuvA tetramers; dsDNA enters through RuvA and exits via RuvB. An RuvB hexamer assembles on each DNA strand where it exits the tetramer. Each RuvB hexamer is contacted by two RuvA subunits (via domain III) on 2 adjacent RuvB subunits; this complex drives branch migration. In the full resolvosome a probable DNA-RuvA(4)-RuvB(12)-RuvC(2) complex forms which resolves the HJ.

Its subcellular location is the cytoplasm. It catalyses the reaction ATP + H2O = ADP + phosphate + H(+). Its function is as follows. The RuvA-RuvB-RuvC complex processes Holliday junction (HJ) DNA during genetic recombination and DNA repair, while the RuvA-RuvB complex plays an important role in the rescue of blocked DNA replication forks via replication fork reversal (RFR). RuvA specifically binds to HJ cruciform DNA, conferring on it an open structure. The RuvB hexamer acts as an ATP-dependent pump, pulling dsDNA into and through the RuvAB complex. RuvB forms 2 homohexamers on either side of HJ DNA bound by 1 or 2 RuvA tetramers; 4 subunits per hexamer contact DNA at a time. Coordinated motions by a converter formed by DNA-disengaged RuvB subunits stimulates ATP hydrolysis and nucleotide exchange. Immobilization of the converter enables RuvB to convert the ATP-contained energy into a lever motion, pulling 2 nucleotides of DNA out of the RuvA tetramer per ATP hydrolyzed, thus driving DNA branch migration. The RuvB motors rotate together with the DNA substrate, which together with the progressing nucleotide cycle form the mechanistic basis for DNA recombination by continuous HJ branch migration. Branch migration allows RuvC to scan DNA until it finds its consensus sequence, where it cleaves and resolves cruciform DNA. This chain is Holliday junction branch migration complex subunit RuvB, found in Rhizobium johnstonii (strain DSM 114642 / LMG 32736 / 3841) (Rhizobium leguminosarum bv. viciae).